The chain runs to 93 residues: Small ribosomal subunit protein uS15 (93 aa).

The protein belongs to the universal ribosomal protein uS15 family. In terms of assembly, part of the 30S ribosomal subunit. Forms a bridge to the 50S subunit in the 70S ribosome, contacting the 23S rRNA.

One of the primary rRNA binding proteins, it binds directly to 16S rRNA where it helps nucleate assembly of the platform of the 30S subunit by binding and bridging several RNA helices of the 16S rRNA. In terms of biological role, forms an intersubunit bridge (bridge B4) with the 23S rRNA of the 50S subunit in the ribosome. In Ehrlichia canis (strain Jake), this protein is Small ribosomal subunit protein uS15.